The sequence spans 415 residues: Lipoyl synthase, mitochondrial (415 aa).

Residues 1-32 (MAVSTSHFRSLCASSRSLSRTGIVAPISCRGY) constitute a mitochondrion transit peptide. The segment at 30–50 (RGYATTEPSPSATSTTTTTTA) is disordered. A compositionally biased stretch (low complexity) spans 33 to 49 (ATTEPSPSATSTTTTTT). 7 residues coordinate [4Fe-4S] cluster: C132, C137, C143, C163, C167, C170, and S378. The 222-residue stretch at 146 to 367 (GSDKSAATAT…RQRALDMGFL (222 aa)) folds into the Radical SAM core domain.

The protein belongs to the radical SAM superfamily. Lipoyl synthase family. It depends on [4Fe-4S] cluster as a cofactor.

The protein resides in the mitochondrion. It catalyses the reaction [[Fe-S] cluster scaffold protein carrying a second [4Fe-4S](2+) cluster] + N(6)-octanoyl-L-lysyl-[protein] + 2 oxidized [2Fe-2S]-[ferredoxin] + 2 S-adenosyl-L-methionine + 4 H(+) = [[Fe-S] cluster scaffold protein] + N(6)-[(R)-dihydrolipoyl]-L-lysyl-[protein] + 4 Fe(3+) + 2 hydrogen sulfide + 2 5'-deoxyadenosine + 2 L-methionine + 2 reduced [2Fe-2S]-[ferredoxin]. It functions in the pathway protein modification; protein lipoylation via endogenous pathway; protein N(6)-(lipoyl)lysine from octanoyl-[acyl-carrier-protein]: step 2/2. Functionally, catalyzes the radical-mediated insertion of two sulfur atoms into the C-6 and C-8 positions of the octanoyl moiety bound to the lipoyl domains of lipoate-dependent enzymes, thereby converting the octanoylated domains into lipoylated derivatives. The polypeptide is Lipoyl synthase, mitochondrial (Neosartorya fischeri (strain ATCC 1020 / DSM 3700 / CBS 544.65 / FGSC A1164 / JCM 1740 / NRRL 181 / WB 181) (Aspergillus fischerianus)).